The chain runs to 316 residues: tRNA methyltransferase 10 homolog B (316 aa).

2 disordered regions span residues M1 to G30 and V42 to N98. Residues V63 to K82 show a composition bias toward basic residues. The stretch at S75 to L96 forms a coiled coil. Residues Q83–D95 are compositionally biased toward basic and acidic residues. The 198-residue stretch at T113–I310 folds into the SAM-dependent MTase TRM10-type domain.

This sequence belongs to the class IV-like SAM-binding methyltransferase superfamily. TRM10 family.

It carries out the reaction guanosine(9) in tRNA + S-adenosyl-L-methionine = N(1)-methylguanosine(9) in tRNA + S-adenosyl-L-homocysteine + H(+). S-adenosyl-L-methionine-dependent guanine N(1)-methyltransferase that catalyzes the formation of N(1)-methylguanine at position 9 (m1G9) in tRNAs. Probably not able to catalyze formation of N(1)-methyladenine at position 9 (m1A9) in tRNAs. The sequence is that of tRNA methyltransferase 10 homolog B (Trmt10b) from Rattus norvegicus (Rat).